Consider the following 336-residue polypeptide: Phosphate acyltransferase (336 aa).

It belongs to the PlsX family. In terms of assembly, homodimer. Probably interacts with PlsY.

Its subcellular location is the cytoplasm. The catalysed reaction is a fatty acyl-[ACP] + phosphate = an acyl phosphate + holo-[ACP]. It functions in the pathway lipid metabolism; phospholipid metabolism. Functionally, catalyzes the reversible formation of acyl-phosphate (acyl-PO(4)) from acyl-[acyl-carrier-protein] (acyl-ACP). This enzyme utilizes acyl-ACP as fatty acyl donor, but not acyl-CoA. In Pseudomonas paraeruginosa (strain DSM 24068 / PA7) (Pseudomonas aeruginosa (strain PA7)), this protein is Phosphate acyltransferase.